We begin with the raw amino-acid sequence, 66 residues long: Small ribosomal subunit protein bS21 (66 aa).

Residues 47–66 (KAQEAARRKRKFARKRMYED) are disordered. A compositionally biased stretch (basic residues) spans 53–66 (RRKRKFARKRMYED).

Belongs to the bacterial ribosomal protein bS21 family.

This chain is Small ribosomal subunit protein bS21, found in Rickettsia bellii (strain RML369-C).